The primary structure comprises 334 residues: Tetraacyldisaccharide 4'-kinase (334 aa).

60 to 67 (TVGGTGKT) lines the ATP pocket.

Belongs to the LpxK family.

The enzyme catalyses a lipid A disaccharide + ATP = a lipid IVA + ADP + H(+). Its pathway is glycolipid biosynthesis; lipid IV(A) biosynthesis; lipid IV(A) from (3R)-3-hydroxytetradecanoyl-[acyl-carrier-protein] and UDP-N-acetyl-alpha-D-glucosamine: step 6/6. Functionally, transfers the gamma-phosphate of ATP to the 4'-position of a tetraacyldisaccharide 1-phosphate intermediate (termed DS-1-P) to form tetraacyldisaccharide 1,4'-bis-phosphate (lipid IVA). This is Tetraacyldisaccharide 4'-kinase from Stutzerimonas stutzeri (strain A1501) (Pseudomonas stutzeri).